A 231-amino-acid polypeptide reads, in one-letter code: Ribonuclease 3 (231 aa).

An RNase III domain is found at 5-134 (QKKLKNDYGL…FLGALFIDQG (130 aa)). E47 contacts Mg(2+). Residue D51 is part of the active site. Mg(2+) is bound by residues N120 and E123. Residue E123 is part of the active site. The DRBM domain maps to 160–229 (DYKTELQEVL…AENAIKGQNH (70 aa)).

Belongs to the ribonuclease III family. As to quaternary structure, homodimer. Requires Mg(2+) as cofactor.

The protein localises to the cytoplasm. The catalysed reaction is Endonucleolytic cleavage to 5'-phosphomonoester.. Digests double-stranded RNA. Involved in the processing of primary rRNA transcript to yield the immediate precursors to the large and small rRNAs (23S and 16S). Processes some mRNAs, and tRNAs when they are encoded in the rRNA operon. Processes pre-crRNA and tracrRNA of type II CRISPR loci if present in the organism. The polypeptide is Ribonuclease 3 (Lactococcus lactis subsp. cremoris (strain MG1363)).